Here is a 302-residue protein sequence, read N- to C-terminus: MSKQAAVIELGYMGISVKDPDAWKSFAMNMLGLQVLDEGEKDRFYLRMDYWHHRIVVHHSAEDDLEYLGWRVAGKPEFEALGQKLIDAGYKIRVCDKVEAQERMVLGLMKTEDPGGNPTEIFWGPRIDMSNPFHPGRPLHGKFVTGDQGLGHCIVRQTDVAAAHKFYSLLGFRGDVEYRIPLPNGMTAELSFMHCNARDHSIAFGAMPAAKRLNHLMLEYTHMEDLGYTHQQFVKNEIDIALQLGIHANDKALTFYGATPSGWLIEPGWRGATAIDEAEYYVGDIFGHGVEAPGYGLDVKLS.

VOC domains lie at 9 to 124 and 149 to 270; these read ELGY…IFWG and GLGH…PGWR. Residue His-152 coordinates Fe cation. Substrate contacts are provided by residues His-152, 199–200, His-215, and Tyr-256; that span reads DH. Residue His-215 coordinates Fe cation. Glu-266 is a Fe cation binding site.

This sequence belongs to the extradiol ring-cleavage dioxygenase family. Fe(2+) is required as a cofactor.

It carries out the reaction naphthalene-1,2-diol + O2 = 2-hydroxychromene-2-carboxylate + H(+). The protein operates within aromatic compound metabolism; naphthalene degradation. With respect to regulation, inhibited by bathophenanthroline sulfonate, o-phenanthroline, 8-hydroxyquinoline, 2,2'-dipyridyl and p-chlormercuribenzoate. Also inhibited by Hg(2+), Cu(2+), Co(2+) and Fe(3+) ions. In terms of biological role, involved in the naphthalene catabolic pathway. Catalyzes the meta-cleavage of 1,2-dihydroxynaphthalene (1,2-DHN) to yield 2-hydroxychromene-2-carboxylic acid. Can also cleave 3-methylcatechol and 4-methylcatechol. The polypeptide is 1,2-dihydroxynaphthalene dioxygenase (nahC) (Pseudomonas putida (Arthrobacter siderocapsulatus)).